The sequence spans 272 residues: Acetylglutamate kinase (272 aa).

Substrate-binding positions include 41–42 (GG), Arg-63, and Asn-166.

Belongs to the acetylglutamate kinase family. ArgB subfamily.

The protein resides in the cytoplasm. The enzyme catalyses N-acetyl-L-glutamate + ATP = N-acetyl-L-glutamyl 5-phosphate + ADP. Its pathway is amino-acid biosynthesis; L-arginine biosynthesis; N(2)-acetyl-L-ornithine from L-glutamate: step 2/4. Its function is as follows. Catalyzes the ATP-dependent phosphorylation of N-acetyl-L-glutamate. In Anaeromyxobacter dehalogenans (strain 2CP-1 / ATCC BAA-258), this protein is Acetylglutamate kinase.